The primary structure comprises 458 residues: Dihydrolipoyl dehydrogenase (458 aa).

FAD-binding positions include 30-38, Lys-47, and Ala-112; that span reads DKGKLGGTC. Cys-38 and Cys-43 form a disulfide bridge. NAD(+) contacts are provided by residues 177–181, Glu-200, and 263–266; these read GGGVI and AIGR. FAD contacts are provided by Asp-305 and Ala-313. The active-site Proton acceptor is His-437.

This sequence belongs to the class-I pyridine nucleotide-disulfide oxidoreductase family. Homodimer. FAD serves as cofactor.

It is found in the cytoplasm. It carries out the reaction N(6)-[(R)-dihydrolipoyl]-L-lysyl-[protein] + NAD(+) = N(6)-[(R)-lipoyl]-L-lysyl-[protein] + NADH + H(+). It participates in ketone degradation; acetoin degradation. The protein is Dihydrolipoyl dehydrogenase (acoL) of Bacillus subtilis (strain 168).